Consider the following 344-residue polypeptide: MHRTTRIKITELNPHLMCALCGGYFIDATTIVECLHSFCKTCIVRYLETNKYCPMCDVQVHKTRPLLSIRSDKTLQDIVYKLVPGLFKDEMKRRRDFYAAYPLTEVPNGSNEDRGEVLEQEKGALSDDEIVSLSIEFYEGARDRDEKKGPLENGDGDKEKTGVRFLRCPAAMTVMHLAKFLRNKMDVPSKYKVEVLYEDEPLKEYYTLMDIAYIYPWRRNGPLPLKYRVQPACKRLTLATVPTPSEGTNTSGASECESVSDKAPSPATLPATSSSLPSPATPSHGSPSSHGPPATHPTSPTPPSTASGATTAANGGSLNCLQTPSSTSRGRKMTVNGAPVPPLT.

An RING-type zinc finger spans residues 18–57 (CALCGGYFIDATTIVECLHSFCKTCIVRYLETNKYCPMCD). Residues K51 and K88 each participate in a glycyl lysine isopeptide (Lys-Gly) (interchain with G-Cter in SUMO2) cross-link. A Nuclear localization signal motif is present at residues 81–95 (KLVPGLFKDEMKRRR). Polar residues predominate over residues 240-253 (TVPTPSEGTNTSGA). The tract at residues 240 to 344 (TVPTPSEGTN…VNGAPVPPLT (105 aa)) is disordered. Residues 263 to 313 (APSPATLPATSSSLPSPATPSHGSPSSHGPPATHPTSPTPPSTASGATTAA) are compositionally biased toward low complexity. Residues 314-328 (NGGSLNCLQTPSSTS) are compositionally biased toward polar residues. The residue at position 344 (T344) is a Phosphothreonine.

In terms of assembly, exists as both a monomer and homodimer. Component of a PRC1-like complex. Interacts with CBX8, RING1 and RNF2. Interacts with CBX7. Interacts with PHC2. Phosphorylated. Homodimer formation is regulated by phosphorylation with only unphosphorylated proteins forming homodimers. In terms of tissue distribution, detected in all tissues examined with high expression found in placenta lung and kidney and low expression, in liver, pancreas and skeletal muscle.

It localises to the nucleus. Its function is as follows. Transcriptional repressor. Binds specifically to the DNA sequence 5'-GACTNGACT-3'. Has tumor suppressor activity. May play a role in control of cell proliferation and/or neural cell development. Regulates proliferation of early T progenitor cells by maintaining expression of HES1. Also plays a role in antero-posterior specification of the axial skeleton and negative regulation of the self-renewal activity of hematopoietic stem cells. Component of a Polycomb group (PcG) multiprotein PRC1-like complex, a complex class required to maintain the transcriptionally repressive state of many genes, including Hox genes, throughout development. PcG PRC1 complex acts via chromatin remodeling and modification of histones; it mediates monoubiquitination of histone H2A 'Lys-119', rendering chromatin heritably changed in its expressibility. Within the PRC1-like complex, regulates RNF2 ubiquitin ligase activity. This is Polycomb group RING finger protein 2 (PCGF2) from Homo sapiens (Human).